The following is a 637-amino-acid chain: Chloride intracellular channel protein 6 (637 aa).

Positions 1–400 (MAETAEPEGG…EASEEGDPGQ (400 aa)) are disordered. The span at 35-63 (GPEASEGAAKAPSGEGAGAAAKAGATEEA) shows a compositional bias: low complexity. Ser39 bears the Phosphoserine mark. Over residues 126–137 (CELRGEAAREAE) the composition is skewed to basic and acidic residues. Residues 138–152 (GQAAAPAAPGAQEEA) show a composition bias toward low complexity. 15 tandem repeats follow at residues 155–160 (GDSVDA), 161–166 (EGSIDA), 167–172 (GGSVDA), 173–178 (AGSVDA), 179–184 (GGSIDA), 185–190 (GGSMDA), 191–196 (GGSVDA), 197–202 (GGSIDT), 203–208 (GGSVDA), 209–214 (AGSVDA), 215–220 (GGSIDT), 221–226 (GRNVDA), 227–232 (GGSIDA), 233–238 (GGSVDA), and 239–244 (GGSMDA). Residues 155–244 (GDSVDAEGSI…SVDAGGSMDA (90 aa)) are 15 X 6 AA tandem repeat of [GEA]-[DGR]-[SN]-[VIM]-D-[AT]. Over residues 247–256 (PAGGAHGAGG) the composition is skewed to gly residues. Acidic residues predominate over residues 305-314 (GSEDAAGEDG). Residues 315–332 (DQGRPQEETEQQAERQEP) are compositionally biased toward basic and acidic residues. Phosphoserine is present on residues Ser348 and Ser393. A G-site motif is present at residues 420–423 (CPFS). The chain crosses the membrane as a helical span at residues 422–442 (FSQRLFMILWLKGVIFNVTTV). The GST C-terminal domain maps to 466–637 (DGDVKTDVNK…AYSDVAKRMK (172 aa)).

The protein belongs to the chloride channel CLIC family. As to quaternary structure, monomer (soluble state). Interacts with dopamine receptors DRD2, DRD3 and DRD4. Phosphorylated. In terms of tissue distribution, expressed in brain, chorioretinal, lacrimal glands, submandibular glands, airway epithelium, kidney and gastric mucosa, where it is preferentially expressed in cells that secrete or transport water. In brain, it is highly expressed in choroid plexus. Not detected in pancreas, adrenal glands, heart, skeletal muscle, ileal mucosa, liver and lung.

It localises to the cytoplasm. The protein localises to the cell membrane. The catalysed reaction is chloride(in) = chloride(out). Channel activity is redox- and pH-regulated. Inhibited by IAA-94. In the soluble state, catalyzes glutaredoxin-like thiol disulfide exchange reactions with reduced glutathione as electron donor. Can insert into membranes and form voltage-dependent chloride-selective channels. The channel opens upon membrane depolarization at positive voltages and closes at negative membrane voltages. May play a critical role in water-secreting cells, possibly through the regulation of chloride ion transport. This is Chloride intracellular channel protein 6 (CLIC6) from Oryctolagus cuniculus (Rabbit).